We begin with the raw amino-acid sequence, 663 residues long: UvrABC system protein B (663 aa).

A compositionally biased stretch (basic and acidic residues) spans 1–10 (MIDKRDDKPF). Residues 1–23 (MIDKRDDKPFKLKSKYKPSGDQP) form a disordered region. Residues 31-271 (DNIEGGEKAQ…EQSIAKIQAE (241 aa)) enclose the Helicase ATP-binding domain. 44–51 (GATGTGKT) lines the ATP pocket. Positions 97 to 120 (YYDYYQPEAYVPSSDTYIEKDSSV) match the Beta-hairpin motif. Residues 435-601 (QIDDLLGEIN…TIKKDIRGLI (167 aa)) enclose the Helicase C-terminal domain. The 36-residue stretch at 627-662 (KEAINALQKQMQEAAELLDFELAAQMRDLILELKLM) folds into the UVR domain.

Belongs to the UvrB family. Forms a heterotetramer with UvrA during the search for lesions. Interacts with UvrC in an incision complex.

Its subcellular location is the cytoplasm. The UvrABC repair system catalyzes the recognition and processing of DNA lesions. A damage recognition complex composed of 2 UvrA and 2 UvrB subunits scans DNA for abnormalities. Upon binding of the UvrA(2)B(2) complex to a putative damaged site, the DNA wraps around one UvrB monomer. DNA wrap is dependent on ATP binding by UvrB and probably causes local melting of the DNA helix, facilitating insertion of UvrB beta-hairpin between the DNA strands. Then UvrB probes one DNA strand for the presence of a lesion. If a lesion is found the UvrA subunits dissociate and the UvrB-DNA preincision complex is formed. This complex is subsequently bound by UvrC and the second UvrB is released. If no lesion is found, the DNA wraps around the other UvrB subunit that will check the other stand for damage. The chain is UvrABC system protein B from Streptococcus pyogenes serotype M5 (strain Manfredo).